We begin with the raw amino-acid sequence, 209 residues long: Small ribosomal subunit protein uS4 (209 aa).

Cys9, Cys12, Cys26, and Cys31 together coordinate Zn(2+). The segment at 9–31 (CKLCRREGMKLYLKGERCYTDKC) adopts a C4-type zinc-finger fold. An S4 RNA-binding domain is found at 98-161 (ARLDNVVYRM…RDLEVIKKAI (64 aa)).

It belongs to the universal ribosomal protein uS4 family. In terms of assembly, part of the 30S ribosomal subunit. Contacts protein S5. The interaction surface between S4 and S5 is involved in control of translational fidelity. The cofactor is Zn(2+).

Functionally, one of the primary rRNA binding proteins, it binds directly to 16S rRNA where it nucleates assembly of the body of the 30S subunit. In terms of biological role, with S5 and S12 plays an important role in translational accuracy. The sequence is that of Small ribosomal subunit protein uS4 (rpsD) from Thermotoga maritima (strain ATCC 43589 / DSM 3109 / JCM 10099 / NBRC 100826 / MSB8).